The chain runs to 206 residues: Recombination protein RecR (206 aa).

Residues 60–75 (CAMCNTFCEGGLCDIC) form a C4-type zinc finger. A Toprim domain is found at 83-178 (RRLMVVHMPA…KVSRLSQGIP (96 aa)).

The protein belongs to the RecR family.

Functionally, may play a role in DNA repair. It seems to be involved in an RecBC-independent recombinational process of DNA repair. It may act with RecF and RecO. The chain is Recombination protein RecR from Neisseria meningitidis serogroup B (strain ATCC BAA-335 / MC58).